Reading from the N-terminus, the 487-residue chain is Virulence sensor histidine kinase PhoQ (487 aa).

At Met-1–Arg-16 the chain is on the cytoplasmic side. The helical transmembrane segment at Phe-17–Leu-37 threads the bilayer. The Periplasmic segment spans residues Val-38–Ser-193. A divalent metal cation-binding residues include Asp-151 and Asp-152. Residues Trp-194–Ala-214 traverse the membrane as a helical segment. An HAMP domain is found at Trp-215–Asn-266. Residues Trp-215–Glu-487 are Cytoplasmic-facing. The region spanning Asp-274 to His-481 is the Histidine kinase domain. A Phosphohistidine; by autocatalysis modification is found at His-277. Position 386 (Asn-386) interacts with Mg(2+). ATP-binding positions include Asn-386–Tyr-394, Asp-416–Ile-421, and Arg-435–Leu-447. Gln-443 is a Mg(2+) binding site.

In terms of assembly, homodimer.

The protein resides in the cell inner membrane. The enzyme catalyses ATP + protein L-histidine = ADP + protein N-phospho-L-histidine.. Its function is as follows. Member of the two-component regulatory system PhoP/PhoQ which regulates the expression of genes involved in virulence and resistance to host defense antimicrobial peptides. In low periplasmic Mg(2+), PhoQ functions as a membrane-associated protein kinase that undergoes autophosphorylation and subsequently transfers the phosphate to PhoP, which results in the expression of PhoP-activated genes (PAG) and repression of PhoP-repressed genes (PRG). In high periplasmic Mg(2+), acts as a protein phosphatase that dephosphorylates phospho-PhoP, which results in the repression of PAG and may lead to expression of some PRG. The chain is Virulence sensor histidine kinase PhoQ (phoQ) from Salmonella paratyphi A (strain ATCC 9150 / SARB42).